Here is an 80-residue protein sequence, read N- to C-terminus: UPF0291 protein LCA_1274 (80 aa).

The tract at residues 59–80 (EGKEVTPEKVKDIQREKGLRDD) is disordered.

The protein belongs to the UPF0291 family.

Its subcellular location is the cytoplasm. This Latilactobacillus sakei subsp. sakei (strain 23K) (Lactobacillus sakei subsp. sakei) protein is UPF0291 protein LCA_1274.